The following is a 66-amino-acid chain: Putative membrane protein insertion efficiency factor (66 aa).

This sequence belongs to the UPF0161 family.

The protein localises to the cell inner membrane. In terms of biological role, could be involved in insertion of integral membrane proteins into the membrane. This is Putative membrane protein insertion efficiency factor from Parasynechococcus marenigrum (strain WH8102).